Reading from the N-terminus, the 1134-residue chain is Tetrathionate reductase subunit A (1134 aa).

A signal peptide (tat-type signal) is located at residues 1–31; that stretch reads MQLSRRDFIKGLVAVGSASVFLAGYSETVDR. A 4Fe-4S Mo/W bis-MGD-type domain is found at 46–133; the sequence is GRIVHSACLG…DGIHYLYDPY (88 aa). The [4Fe-4S] cluster site is built by Cys53, Cys56, Cys60, and Cys119.

Belongs to the prokaryotic molybdopterin-containing oxidoreductase family. Probably composed of three subunits: TtrA, TtrB and TtrC. Precursor interacts with TtrD. The cofactor is [4Fe-4S] cluster. It depends on Mo-bis(molybdopterin guanine dinucleotide) as a cofactor. Exported by the Tat system. The position of the signal peptide cleavage has not been experimentally proven.

It is found in the cell membrane. Part of a membrane-bound tetrathionate reductase that catalyzes the reduction of tetrathionate to thiosulfate. TtrA is the catalytic subunit. This Archaeoglobus fulgidus (strain ATCC 49558 / DSM 4304 / JCM 9628 / NBRC 100126 / VC-16) protein is Tetrathionate reductase subunit A (ttrA).